A 146-amino-acid polypeptide reads, in one-letter code: Cyanate hydratase (146 aa).

Active-site residues include R87, E90, and S113.

It belongs to the cyanase family.

The enzyme catalyses cyanate + hydrogencarbonate + 3 H(+) = NH4(+) + 2 CO2. Its function is as follows. Catalyzes the reaction of cyanate with bicarbonate to produce ammonia and carbon dioxide. The chain is Cyanate hydratase from Pseudomonas putida (strain ATCC 700007 / DSM 6899 / JCM 31910 / BCRC 17059 / LMG 24140 / F1).